Reading from the N-terminus, the 463-residue chain is ATP-dependent protease ATPase subunit HslU (463 aa).

Residues isoleucine 19, 61–66 (GVGKTE), aspartate 277, glutamate 341, and arginine 413 each bind ATP.

Belongs to the ClpX chaperone family. HslU subfamily. A double ring-shaped homohexamer of HslV is capped on each side by a ring-shaped HslU homohexamer. The assembly of the HslU/HslV complex is dependent on binding of ATP.

It localises to the cytoplasm. Functionally, ATPase subunit of a proteasome-like degradation complex; this subunit has chaperone activity. The binding of ATP and its subsequent hydrolysis by HslU are essential for unfolding of protein substrates subsequently hydrolyzed by HslV. HslU recognizes the N-terminal part of its protein substrates and unfolds these before they are guided to HslV for hydrolysis. The polypeptide is ATP-dependent protease ATPase subunit HslU (Bacillus cytotoxicus (strain DSM 22905 / CIP 110041 / 391-98 / NVH 391-98)).